The primary structure comprises 334 residues: Tryptophan--tRNA ligase (334 aa).

Residues 11 to 13 (QPS) and 19 to 20 (GN) contribute to the ATP site. Residues 12-20 (PSGELTIGN) carry the 'HIGH' region motif. Residue aspartate 135 coordinates L-tryptophan. ATP-binding positions include 147–149 (GED), valine 186, and 195–199 (KMSKS). The short motif at 195 to 199 (KMSKS) is the 'KMSKS' region element.

It belongs to the class-I aminoacyl-tRNA synthetase family. Homodimer.

It localises to the cytoplasm. It catalyses the reaction tRNA(Trp) + L-tryptophan + ATP = L-tryptophyl-tRNA(Trp) + AMP + diphosphate + H(+). Functionally, catalyzes the attachment of tryptophan to tRNA(Trp). This Shigella flexneri protein is Tryptophan--tRNA ligase.